The sequence spans 310 residues: Bifunctional protein FolD 3, chloroplastic (310 aa).

A chloroplast-targeting transit peptide spans Met1 to Arg48.

This sequence belongs to the tetrahydrofolate dehydrogenase/cyclohydrolase family. In terms of assembly, homodimer.

The protein resides in the plastid. The protein localises to the chloroplast. The catalysed reaction is (6R)-5,10-methylene-5,6,7,8-tetrahydrofolate + NADP(+) = (6R)-5,10-methenyltetrahydrofolate + NADPH. It catalyses the reaction (6R)-5,10-methenyltetrahydrofolate + H2O = (6R)-10-formyltetrahydrofolate + H(+). It participates in one-carbon metabolism; tetrahydrofolate interconversion. Its function is as follows. Catalyzes the oxidation of 5,10-methylenetetrahydrofolate to 5,10-methenyltetrahydrofolate and then the hydrolysis of 5,10-methenyltetrahydrofolate to 10-formyltetrahydrofolate. In Arabidopsis thaliana (Mouse-ear cress), this protein is Bifunctional protein FolD 3, chloroplastic (FOLD3).